Reading from the N-terminus, the 340-residue chain is Dof zinc finger protein DOF2.2 (340 aa).

The disordered stretch occupies residues 12–33; that stretch reads PPINWPQSANPNNHPHHHQLQE. The segment at 94-148 adopts a Dof-type zinc-finger fold; the sequence is LKCPRCDSANTKFCYFNNYNLTQPRHFCKACRRYWTRGGALRNVPVGGGCRRNKK. 4 residues coordinate Zn(2+): Cys-96, Cys-99, Cys-121, and Cys-124. 2 disordered regions span residues 138 to 180 and 301 to 340; these read PVGG…TSNV and GNIS…QHLM. Over residues 151–165 the composition is skewed to low complexity; it reads SGNSKSSSSSQNKQS. 2 stretches are compositionally biased toward polar residues: residues 166–180 and 309–331; these read TSMV…TSNV and GLTS…GSSS.

Its subcellular location is the nucleus. Functionally, transcription factor that binds specifically to a 5'-AA[AG]G-3' consensus core sequence. The protein is Dof zinc finger protein DOF2.2 (DOF2.2) of Arabidopsis thaliana (Mouse-ear cress).